The chain runs to 298 residues: ADP/ATP translocase 3 (298 aa).

Position 1 is an N-acetylmethionine (methionine 1). Topologically, residues 1-7 are mitochondrial intermembrane; it reads MTEQAIS. Threonine 2 is modified (N-acetylthreonine; in ADP/ATP translocase 3, N-terminally processed). The Solcar 1 repeat unit spans residues 6–98; it reads ISFAKDFLAG…FAFKDKYKQI (93 aa). The helical transmembrane segment at 8-37 threads the bilayer; that stretch reads FAKDFLAGGIAAAISKTAVAPIERVKLLLQ. Over 38–74 the chain is Mitochondrial matrix; the sequence is VQHASKQIAADKQYKGIVDCIVRIPKEQGVLSFWRGN. Lysine 52 is subject to N6,N6,N6-trimethyllysine. A helical transmembrane segment spans residues 75-99; it reads LANVIRYFPTQALNFAFKDKYKQIF. ADP-binding residues include arginine 80 and lysine 92. Topologically, residues 100–109 are mitochondrial intermembrane; it reads LGGVDKHTQF. An N6-acetyllysine modification is found at lysine 105. Residues 110 to 130 traverse the membrane as a helical segment; that stretch reads WRYFAGNLASGGAAGATSLCF. Solcar repeat units lie at residues 111–201 and 212–297; these read RYFA…AKGM and VSWM…LKKV. The Mitochondrial matrix portion of the chain corresponds to 131-178; that stretch reads VYPLDFARTRLAADVGKSGTEREFRGLGDCLVKITKSDGIRGLYQGFS. A helical transmembrane segment spans residues 179–199; sequence VSVQGIIIYRAAYFGVYDTAK. At 200–210 the chain is on the mitochondrial intermembrane side; that stretch reads GMLPDPKNTHI. The helical transmembrane segment at 211–231 threads the bilayer; that stretch reads VVSWMIAQTVTAVAGVVSYPF. Residues 232–273 lie on the Mitochondrial matrix side of the membrane; sequence DTVRRRMMMQSGRKGADIMYTGTVDCWRKIFRDEGGKAFFKG. Arginine 235 contributes to the ADP binding site. The important for transport activity stretch occupies residues 235–240; that stretch reads RRRMMM. Residues 235 to 240 carry the Nucleotide carrier signature motif motif; sequence RRRMMM. Residue lysine 268 is modified to N6-acetyllysine. A helical membrane pass occupies residues 274–291; that stretch reads AWSNVLRGMGGAFVLVLY. Residues 292-298 lie on the Mitochondrial intermembrane side of the membrane; it reads DELKKVI.

The protein belongs to the mitochondrial carrier (TC 2.A.29) family. In terms of assembly, monomer. Found in a complex with ARL2, ARL2BP and SLC25A6/ANT3. As to quaternary structure, (Microbial infection) Interacts with influenza A virus PB1-F2 protein. (Microbial infection) Interacts with HIV-1 Vpr. Trimethylated by ANTKMT at Lys-52. Expressed in erythrocytes (at protein level).

The protein localises to the mitochondrion inner membrane. It localises to the membrane. It catalyses the reaction ADP(in) + ATP(out) = ADP(out) + ATP(in). The catalysed reaction is H(+)(in) = H(+)(out). Its activity is regulated as follows. The matrix-open state (m-state) is inhibited by the membrane-permeable bongkrekic acid (BKA). The cytoplasmic-open state (c-state) is inhibited by the membrane-impermeable toxic inhibitor carboxyatractyloside (CATR). Proton transporter activity is inhibited by ADP:ATP antiporter activity. ADP:ATP antiporter that mediates import of ADP into the mitochondrial matrix for ATP synthesis, and export of ATP out to fuel the cell. Cycles between the cytoplasmic-open state (c-state) and the matrix-open state (m-state): operates by the alternating access mechanism with a single substrate-binding site intermittently exposed to either the cytosolic (c-state) or matrix (m-state) side of the inner mitochondrial membrane. In addition to its ADP:ATP antiporter activity, also involved in mitochondrial uncoupling and mitochondrial permeability transition pore (mPTP) activity. Plays a role in mitochondrial uncoupling by acting as a proton transporter: proton transport uncouples the proton flows via the electron transport chain and ATP synthase to reduce the efficiency of ATP production and cause mitochondrial thermogenesis. Proton transporter activity is inhibited by ADP:ATP antiporter activity, suggesting that SLC25A6/ANT3 acts as a master regulator of mitochondrial energy output by maintaining a delicate balance between ATP production (ADP:ATP antiporter activity) and thermogenesis (proton transporter activity). Proton transporter activity requires free fatty acids as cofactor, but does not transport it. Also plays a key role in mPTP opening, a non-specific pore that enables free passage of the mitochondrial membranes to solutes of up to 1.5 kDa, and which contributes to cell death. It is however unclear if SLC25A6/ANT3 constitutes a pore-forming component of mPTP or regulates it. This Homo sapiens (Human) protein is ADP/ATP translocase 3.